Consider the following 427-residue polypeptide: Protein TIFY 6a (427 aa).

Over residues Met1–Tyr25 the composition is skewed to basic and acidic residues. The interval Met1 to Ser33 is disordered. A Tify domain is found at Gln196–Arg231. Polar residues-rich tracts occupy residues Leu293 to Ser303 and Pro317 to Ile327. Residues Leu293–Ile327 form a disordered region. The Jas motif lies at Pro343–Tyr367. A Nuclear localization signal motif is present at residues Ala345 to Arg352. A disordered region spans residues Arg360–Ile427. Polar residues-rich tracts occupy residues Ser369–Glu402 and Arg411–Ile427.

It belongs to the TIFY/JAZ family. In terms of processing, ubiquitinated.

It is found in the nucleus. Its function is as follows. Repressor of jasmonate responses. This chain is Protein TIFY 6a, found in Oryza sativa subsp. indica (Rice).